The sequence spans 300 residues: 4-hydroxy-tetrahydrodipicolinate synthase (300 aa).

Thr54 is a binding site for pyruvate. Tyr142 (proton donor/acceptor) is an active-site residue. The active-site Schiff-base intermediate with substrate is the Lys170. A pyruvate-binding site is contributed by Ile212.

The protein belongs to the DapA family. As to quaternary structure, homotetramer; dimer of dimers.

The protein localises to the cytoplasm. The catalysed reaction is L-aspartate 4-semialdehyde + pyruvate = (2S,4S)-4-hydroxy-2,3,4,5-tetrahydrodipicolinate + H2O + H(+). Its pathway is amino-acid biosynthesis; L-lysine biosynthesis via DAP pathway; (S)-tetrahydrodipicolinate from L-aspartate: step 3/4. Catalyzes the condensation of (S)-aspartate-beta-semialdehyde [(S)-ASA] and pyruvate to 4-hydroxy-tetrahydrodipicolinate (HTPA). The polypeptide is 4-hydroxy-tetrahydrodipicolinate synthase (Halorhodospira halophila (strain DSM 244 / SL1) (Ectothiorhodospira halophila (strain DSM 244 / SL1))).